The sequence spans 344 residues: uncharacterized protein (344 aa).

Positions 1–19 are cleaved as a signal peptide; the sequence is MRIIFYLTLLLFIFNKVKS. The propeptide at 323–344 is removed in mature form; it reads SATRNQISIMVLILSVLLVLIL.

It is found in the cell membrane. This is an uncharacterized protein from Dictyostelium discoideum (Social amoeba).